The sequence spans 148 residues: Snaclec 3 (148 aa).

Positions 1–23 (WGDSSSSASACWSCSSPLSGTEA) are cleaved as a signal peptide. 3 disulfide bridges follow: C27–C38, C55–C144, and C121–C136. The 112-residue stretch at 34-145 (YDQNCYKAFE…CSGTHSFVCK (112 aa)) folds into the C-type lectin domain.

This sequence belongs to the snaclec family. Heterodimer; disulfide-linked. Expressed by the venom gland.

It localises to the secreted. In terms of biological role, interferes with one step of hemostasis (modulation of platelet aggregation, or coagulation cascade, for example). The sequence is that of Snaclec 3 from Echis carinatus sochureki (Saw-scaled viper).